Here is a 70-residue protein sequence, read N- to C-terminus: MIMRMTLTLFVLVVMTAASASGDALTEAKRVPYCGQTGAECYSWCKEQHLIRCCDFVKYVGMNPPADKCR.

An N-terminal signal peptide occupies residues 1-22; sequence MIMRMTLTLFVLVVMTAASASG. Residues 23–30 constitute a propeptide that is removed on maturation; the sequence is DALTEAKR. 3 disulfide bridges follow: Cys-34/Cys-41, Cys-45/Cys-53, and Cys-54/Cys-69.

This sequence belongs to the conotoxin K superfamily. As to expression, expressed by the venom duct.

It is found in the secreted. Probable neurotoxin. This chain is Conotoxin Im23.4, found in Conus imperialis (Imperial cone).